Reading from the N-terminus, the 413-residue chain is Arginine biosynthesis bifunctional protein ArgJ (413 aa).

6 residues coordinate substrate: Thr-163, Lys-189, Thr-200, Glu-286, Asn-408, and Thr-413. Thr-200 functions as the Nucleophile in the catalytic mechanism.

Belongs to the ArgJ family. In terms of assembly, heterotetramer of two alpha and two beta chains.

The protein resides in the cytoplasm. The catalysed reaction is N(2)-acetyl-L-ornithine + L-glutamate = N-acetyl-L-glutamate + L-ornithine. It catalyses the reaction L-glutamate + acetyl-CoA = N-acetyl-L-glutamate + CoA + H(+). It functions in the pathway amino-acid biosynthesis; L-arginine biosynthesis; L-ornithine and N-acetyl-L-glutamate from L-glutamate and N(2)-acetyl-L-ornithine (cyclic): step 1/1. Its pathway is amino-acid biosynthesis; L-arginine biosynthesis; N(2)-acetyl-L-ornithine from L-glutamate: step 1/4. Catalyzes two activities which are involved in the cyclic version of arginine biosynthesis: the synthesis of N-acetylglutamate from glutamate and acetyl-CoA as the acetyl donor, and of ornithine by transacetylation between N(2)-acetylornithine and glutamate. This chain is Arginine biosynthesis bifunctional protein ArgJ, found in Staphylococcus aureus (strain Mu50 / ATCC 700699).